We begin with the raw amino-acid sequence, 208 residues long: Large ribosomal subunit protein uL4 (208 aa).

The segment at 45–84 is disordered; that stretch reads RQGTHKVKNRSEVRGGGKKPYRQKGTGHARQGSSRSGLMS. Residues 60-71 show a composition bias toward basic residues; it reads GGKKPYRQKGTG.

This sequence belongs to the universal ribosomal protein uL4 family. As to quaternary structure, part of the 50S ribosomal subunit.

Its function is as follows. One of the primary rRNA binding proteins, this protein initially binds near the 5'-end of the 23S rRNA. It is important during the early stages of 50S assembly. It makes multiple contacts with different domains of the 23S rRNA in the assembled 50S subunit and ribosome. Functionally, forms part of the polypeptide exit tunnel. In Prosthecochloris aestuarii (strain DSM 271 / SK 413), this protein is Large ribosomal subunit protein uL4.